The following is a 173-amino-acid chain: bZIP transcription factor 44 (173 aa).

The interval 1-65 (MNNKTEMGSS…SRMRKQKHLD (65 aa)) is disordered. The segment covering 8–22 (GSSTSGNCSSVSTTG) has biased composition (low complexity). Residues 30-41 (SDLRQRDLIDER) show a composition bias toward basic and acidic residues. Residues 39 to 102 (DERKRKRKQS…VTIEAENDIL (64 aa)) form the bZIP domain. The tract at residues 41–62 (RKRKRKQSNRESARRSRMRKQK) is basic motif. Residues 67–81 (LTAQVTHLRKENAQI) are leucine-zipper.

In terms of assembly, forms heterodimers with BZIP1, BZIP9, BZIP10, BZIP25 and BZIP63. In terms of tissue distribution, expressed in the micropylar endosperm and radicle tip in early germinating seeds.

The protein localises to the nucleus. Its function is as follows. Transcription factor that binds to the DNA G-box motif 5'-CACGTG-3' of MAN7 promoter. Involved in the positive regulation of seed germination through MAN7 gene activation. MAN7 is required for both, loosening of the micropylar endosperm, and rupture of the seed coat in germinating seeds. This chain is bZIP transcription factor 44, found in Arabidopsis thaliana (Mouse-ear cress).